The sequence spans 223 residues: Type 3 secretion system stator protein (223 aa).

This sequence belongs to the SctL stator family. In terms of assembly, the core secretion machinery of the T3SS is composed of approximately 20 different proteins, including cytoplasmic components, a base, an export apparatus and a needle. This subunit is part of the cytosolic complex. Interacts directly with YscN/SctN (T3SS ATPase) and YscQ/SctQ (the major sorting platform component). Forms homodimers.

The protein localises to the cytoplasm. Its function is as follows. Component of the type III secretion system (T3SS), also called injectisome, which is used to inject bacterial effector proteins into eukaryotic host cells. Acts as a regulator of the YscN/SctN ATPase activity. Overexpression of YscL/SctL abolishes type III secretion and down-regulates the expression of secretion apparatus components. The polypeptide is Type 3 secretion system stator protein (Yersinia enterocolitica).